The following is a 360-amino-acid chain: DNA replication and repair protein RecF (360 aa).

30-37 (GHNGSGKT) contacts ATP.

Belongs to the RecF family.

The protein localises to the cytoplasm. Its function is as follows. The RecF protein is involved in DNA metabolism; it is required for DNA replication and normal SOS inducibility. RecF binds preferentially to single-stranded, linear DNA. It also seems to bind ATP. This chain is DNA replication and repair protein RecF, found in Actinobacillus pleuropneumoniae serotype 5b (strain L20).